A 717-amino-acid polypeptide reads, in one-letter code: Protein E2 homolog (717 aa).

Belongs to the poxviridae E2 protein family.

The sequence is that of Protein E2 homolog from Fowlpox virus (strain NVSL) (FPV).